The chain runs to 512 residues: Maturase K (512 aa).

Belongs to the intron maturase 2 family. MatK subfamily.

It localises to the plastid. It is found in the chloroplast. Its function is as follows. Usually encoded in the trnK tRNA gene intron. Probably assists in splicing its own and other chloroplast group II introns. This is Maturase K from Lemna minor (Common duckweed).